The primary structure comprises 554 residues: Glucose-6-phosphate isomerase (554 aa).

The Proton donor role is filled by Glu-359. Active-site residues include His-390 and Lys-518.

The protein belongs to the GPI family.

It is found in the cytoplasm. The catalysed reaction is alpha-D-glucose 6-phosphate = beta-D-fructose 6-phosphate. It participates in carbohydrate biosynthesis; gluconeogenesis. Its pathway is carbohydrate degradation; glycolysis; D-glyceraldehyde 3-phosphate and glycerone phosphate from D-glucose: step 2/4. Functionally, catalyzes the reversible isomerization of glucose-6-phosphate to fructose-6-phosphate. The protein is Glucose-6-phosphate isomerase of Pseudomonas fluorescens (strain ATCC BAA-477 / NRRL B-23932 / Pf-5).